A 527-amino-acid polypeptide reads, in one-letter code: T-complex protein 1 subunit beta (527 aa).

It belongs to the TCP-1 chaperonin family. In terms of assembly, heterooligomeric complex of about 850 to 900 kDa that forms two stacked rings, 12 to 16 nm in diameter.

Its subcellular location is the cytoplasm. Molecular chaperone; assists the folding of proteins upon ATP hydrolysis. Known to play a role, in vitro, in the folding of actin and tubulin. In Arabidopsis thaliana (Mouse-ear cress), this protein is T-complex protein 1 subunit beta.